The chain runs to 223 residues: Ras-related protein RABA4c (223 aa).

GTP is bound at residue glycine 22–serine 29. The short motif at serine 44–phenylalanine 52 is the Effector region element. GTP contacts are provided by residues aspartate 70–glutamine 74, asparagine 128–aspartate 131, and serine 158–alanine 159. S-geranylgeranyl cysteine attachment occurs at residues cysteine 219 and cysteine 220.

It belongs to the small GTPase superfamily. Rab family.

The protein localises to the cell membrane. In terms of biological role, intracellular vesicle trafficking and protein transport. This chain is Ras-related protein RABA4c (RABA4C), found in Arabidopsis thaliana (Mouse-ear cress).